Consider the following 270-residue polypeptide: Regulatory protein RecX (270 aa).

It belongs to the RecX family.

The protein resides in the cytoplasm. Modulates RecA activity. This chain is Regulatory protein RecX, found in Bacillus mycoides (strain KBAB4) (Bacillus weihenstephanensis).